The sequence spans 379 residues: MTDVDKKDPQYKQIFLERFRKKLQSDKTGMSDLESFVELPEGITPVAASIGPIKRGSEPLPPWLKLNVPKGMTHRPRFNRIRRSMREKKLSTVCEEAKCPNIGECWGGGEDNGAATATIMVMGSHCTRGCRFCSVLTSRRPPPLDPDEPEKVAAAVHEMGVDYIVMTMVDRDDLPDGGASHVSRCIRTIKEQNPELMLEALVGDFHGDLKVVEQLAATPLSVYAHNIECVERITPRVRDHRATYKQSLQTLEHVTKWTNGKMLTKSSIMLGLGEEEEEVRQTLRDLRTAGVSAVTLGQYLQPSRTRLKVSRYAHPKEFEMWEKEAMSMGFLYCASGPMVRSSYRAGEYYIKNIVKQRENAKGATTMEAVTAADAVAAGA.

[4Fe-4S] cluster contacts are provided by Cys94, Cys99, Cys105, Cys126, Cys130, Cys133, and Ser342. Positions 109-331 (GEDNGAATAT…EKEAMSMGFL (223 aa)) constitute a Radical SAM core domain.

This sequence belongs to the radical SAM superfamily. Lipoyl synthase family. [4Fe-4S] cluster serves as cofactor.

The protein resides in the mitochondrion. It carries out the reaction [[Fe-S] cluster scaffold protein carrying a second [4Fe-4S](2+) cluster] + N(6)-octanoyl-L-lysyl-[protein] + 2 oxidized [2Fe-2S]-[ferredoxin] + 2 S-adenosyl-L-methionine + 4 H(+) = [[Fe-S] cluster scaffold protein] + N(6)-[(R)-dihydrolipoyl]-L-lysyl-[protein] + 4 Fe(3+) + 2 hydrogen sulfide + 2 5'-deoxyadenosine + 2 L-methionine + 2 reduced [2Fe-2S]-[ferredoxin]. Its pathway is protein modification; protein lipoylation via endogenous pathway; protein N(6)-(lipoyl)lysine from octanoyl-[acyl-carrier-protein]: step 2/2. Its function is as follows. Catalyzes the radical-mediated insertion of two sulfur atoms into the C-6 and C-8 positions of the octanoyl moiety bound to the lipoyl domains of lipoate-dependent enzymes, thereby converting the octanoylated domains into lipoylated derivatives. This Leishmania braziliensis protein is Lipoyl synthase, mitochondrial.